Reading from the N-terminus, the 456-residue chain is Dual-specificity RNA methyltransferase RlmN (456 aa).

Residues 1-21 (MIQRHLGQPRLIQNGGDAGGV) are disordered. The Proton acceptor role is filled by glutamate 175. The Radical SAM core domain occupies 183–416 (DEERGAVCIS…QDAGYSAPIR (234 aa)). An intrachain disulfide couples cysteine 190 to cysteine 427. [4Fe-4S] cluster is bound by residues cysteine 197, cysteine 201, and cysteine 204. S-adenosyl-L-methionine-binding positions include 253–254 (GE), serine 285, 307–309 (SLH), and asparagine 384. The S-methylcysteine intermediate role is filled by cysteine 427.

The protein belongs to the radical SAM superfamily. RlmN family. Requires [4Fe-4S] cluster as cofactor.

It is found in the cytoplasm. The catalysed reaction is adenosine(2503) in 23S rRNA + 2 reduced [2Fe-2S]-[ferredoxin] + 2 S-adenosyl-L-methionine = 2-methyladenosine(2503) in 23S rRNA + 5'-deoxyadenosine + L-methionine + 2 oxidized [2Fe-2S]-[ferredoxin] + S-adenosyl-L-homocysteine. It catalyses the reaction adenosine(37) in tRNA + 2 reduced [2Fe-2S]-[ferredoxin] + 2 S-adenosyl-L-methionine = 2-methyladenosine(37) in tRNA + 5'-deoxyadenosine + L-methionine + 2 oxidized [2Fe-2S]-[ferredoxin] + S-adenosyl-L-homocysteine. Its function is as follows. Specifically methylates position 2 of adenine 2503 in 23S rRNA and position 2 of adenine 37 in tRNAs. m2A2503 modification seems to play a crucial role in the proofreading step occurring at the peptidyl transferase center and thus would serve to optimize ribosomal fidelity. This is Dual-specificity RNA methyltransferase RlmN from Paramagnetospirillum magneticum (strain ATCC 700264 / AMB-1) (Magnetospirillum magneticum).